The primary structure comprises 35 residues: Small toxic polypeptide LdrB (35 aa).

The chain crosses the membrane as a helical span at residues 10-30 (FWHDLAAPILAGIITAAIVGW).

It belongs to the Ldr toxic peptide family.

The protein resides in the cell inner membrane. Toxic component of a type I toxin-antitoxin (TA) system. Overexpression causes rapid cell killing, probably by disrupting the cell inner membrane and disruption of ATP synthesis. This is Small toxic polypeptide LdrB (ldrB) from Escherichia coli (strain K12).